Reading from the N-terminus, the 298-residue chain is Ribosomal RNA small subunit methyltransferase H (298 aa).

Residues 35-37 (GGH), D55, F82, D100, and Q107 each bind S-adenosyl-L-methionine.

This sequence belongs to the methyltransferase superfamily. RsmH family.

The protein localises to the cytoplasm. The enzyme catalyses cytidine(1402) in 16S rRNA + S-adenosyl-L-methionine = N(4)-methylcytidine(1402) in 16S rRNA + S-adenosyl-L-homocysteine + H(+). Functionally, specifically methylates the N4 position of cytidine in position 1402 (C1402) of 16S rRNA. The protein is Ribosomal RNA small subunit methyltransferase H of Chlamydia felis (strain Fe/C-56) (Chlamydophila felis).